A 180-amino-acid polypeptide reads, in one-letter code: Oligoribonuclease (180 aa).

Residues 7–170 form the Exonuclease domain; sequence LIWIDLEMTG…DDIRESIAEL (164 aa). Residue Y128 is part of the active site.

Belongs to the oligoribonuclease family.

The protein resides in the cytoplasm. Its function is as follows. 3'-to-5' exoribonuclease specific for small oligoribonucleotides. This is Oligoribonuclease from Pseudomonas fluorescens (strain ATCC BAA-477 / NRRL B-23932 / Pf-5).